The primary structure comprises 472 residues: Zinc finger and BTB domain-containing protein 18.2 (472 aa).

Residues 24-91 form the BTB domain; the sequence is CDCTVLVGEA…MYEGKLEFSN (68 aa). Residues 127–149 show a composition bias toward basic and acidic residues; it reads KIIDDGEKDDKPVDSEEHHEHSF. 3 disordered regions span residues 127-155, 197-236, and 269-334; these read KIID…SQQK, AGKT…FKPM, and DLLS…LSTS. Low complexity predominate over residues 205–215; it reads SSPSSPLSQRS. Over residues 279-288 the composition is skewed to polar residues; the sequence is AKSPKSQQVG. The span at 309–319 shows a compositional bias: basic and acidic residues; sequence HTREDDLYQDR. 4 consecutive C2H2-type zinc fingers follow at residues 344-366, 384-406, 412-434, and 440-463; these read CICP…LSSH, PTCT…ERTH, FTCG…AVVH, and HACK…RKFH.

Belongs to the krueppel C2H2-type zinc-finger protein family. ZBTB18 subfamily.

Its subcellular location is the nucleus. Functionally, transcriptional repressor that plays a role in various developmental processes. Specifically binds the consensus DNA sequence 5'-[AC]ACATCTG[GT][AC]-3' which contains the E box core, and acts by recruiting chromatin remodeling multiprotein complexes. In Xenopus laevis (African clawed frog), this protein is Zinc finger and BTB domain-containing protein 18.2 (zbtb18.2).